A 267-amino-acid polypeptide reads, in one-letter code: Beta-lactamase OXA-5 (267 aa).

Residues 1-19 (MKTIAAYLVLVFYASTALS) form the signal peptide. The Acyl-ester intermediate role is filled by S67. An N6-carboxylysine modification is found at K70. 205 to 207 (KTG) is a substrate binding site.

It belongs to the class-D beta-lactamase family.

The enzyme catalyses a beta-lactam + H2O = a substituted beta-amino acid. Inhibited by clavulanic acid. In terms of biological role, hydrolyzes both oxacillin and methicillin. This Pseudomonas aeruginosa protein is Beta-lactamase OXA-5 (bla).